Consider the following 267-residue polypeptide: X-box-binding protein 1 (267 aa).

At 1 to 180 (MVVVAAAPSA…VQAQLSPPQN (180 aa)) the chain is on the cytoplasmic side. The tract at residues 35-60 (VPGPRAAGSEASGTPQARKRQRLTHL) is disordered. The residue at position 61 (Ser-61) is a Phosphoserine. Residues 63-126 (EEKALRRKLK…HGLVIENQEL (64 aa)) enclose the bZIP domain. The segment at 65–87 (KALRRKLKNRVAAQTARDRKKAR) is basic motif. The segment at 69-85 (RKLKNRVAAQTARDRKK) is nuclear localization signal (NLS). Residues 91–126 (LEQQVVDLEEENQKLQLENQLLREKTHGLVIENQEL) are leucine-zipper. Residues 181–198 (IFPWILTLLPLQILSLIS) traverse the membrane as a helical; Signal-anchor for type II membrane protein segment. Residues 199-267 (FWAFWTSWTL…FVLTMYTPSL (69 aa)) are Lumenal-facing.

The protein belongs to the bZIP family. Isoform 1 interacts with HM13. Isoform 1 interacts with RNF139; the interaction induces ubiquitination and degradation of isoform 1. Isoform 1 interacts (via luminal domain) with DERL1; the interaction obviates the need for ectodomain shedding prior HM13/SPP-mediated XBP1 isoform 1 cleavage. Isoform 1 interacts with HDAC3 and AKT1; the interactions occur in endothelial cell (EC) under disturbed flow. Isoform 1 interacts with the oncoprotein FOS. Interacts with SIRT1. Isoform 1 is ubiquitinated, leading to proteasome-mediated degradation in response to ER stress. In terms of processing, X-box-binding protein 1, cytoplasmic form and luminal form are produced by intramembrane proteolytic cleavage of ER membrane-anchored isoform 1 triggered by HM13/SPP in a DERL1-RNF139-dependent and VCP/p97-independent manner. X-box-binding protein 1, luminal form is ubiquitinated leading to proteasomal degradation. Post-translationally, acetylated by EP300; acetylation positively regulates the transcriptional activity of XBP1. Deacetylated by SIRT1; deacetylation negatively regulates the transcriptional activity of XBP1.

Its subcellular location is the nucleus. The protein resides in the endoplasmic reticulum. It localises to the cytoplasm. The protein localises to the endoplasmic reticulum membrane. It is found in the membrane. Functionally, functions as a transcription factor during endoplasmic reticulum (ER) stress by regulating the unfolded protein response (UPR). Required for cardiac myogenesis and hepatogenesis during embryonic development, and the development of secretory tissues such as exocrine pancreas and salivary gland. Involved in terminal differentiation of B lymphocytes to plasma cells and production of immunoglobulins. Modulates the cellular response to ER stress in a PIK3R-dependent manner. Binds to the cis-acting X box present in the promoter regions of major histocompatibility complex class II genes. Involved in VEGF-induced endothelial cell (EC) proliferation and retinal blood vessel formation during embryonic development but also for angiogenesis in adult tissues under ischemic conditions. Functions also as a major regulator of the UPR in obesity-induced insulin resistance and type 2 diabetes for the management of obesity and diabetes prevention. Acts as a weak transcriptional factor. Together with HDAC3, contributes to the activation of NFE2L2-mediated HMOX1 transcription factor gene expression in a PI(3)K/mTORC2/Akt-dependent signaling pathway leading to EC survival under disturbed flow/oxidative stress. Binds to the ER stress response element (ERSE) upon ER stress. Binds to the consensus 5'-GATGACGTG[TG]N(3)[AT]T-3' sequence related to cAMP responsive element (CRE)-like sequences. Associates preferentially to the HDAC3 gene promoter region in a static flow-dependent manner. Binds to the CDH5/VE-cadherin gene promoter region. The polypeptide is X-box-binding protein 1 (Rattus norvegicus (Rat)).